A 939-amino-acid polypeptide reads, in one-letter code: Protein translocase subunit SecA (939 aa).

ATP is bound by residues Gln-85, 103-107, and Asp-504; that span reads GEGKT. The tract at residues 850–939 is disordered; that stretch reads PVQDGAERPS…KGGGGRRRKK (90 aa). The segment covering 854-864 has biased composition (basic and acidic residues); sequence GAERPSLEKEG. A compositionally biased stretch (basic residues) spans 924–939; it reads ERRKAQKGGGGRRRKK.

This sequence belongs to the SecA family. In terms of assembly, monomer and homodimer. Part of the essential Sec protein translocation apparatus which comprises SecA, SecYEG and auxiliary proteins SecDF. Other proteins may also be involved.

The protein resides in the cell membrane. Its subcellular location is the cytoplasm. The enzyme catalyses ATP + H2O + cellular proteinSide 1 = ADP + phosphate + cellular proteinSide 2.. Functionally, part of the Sec protein translocase complex. Interacts with the SecYEG preprotein conducting channel. Has a central role in coupling the hydrolysis of ATP to the transfer of proteins into and across the cell membrane, serving as an ATP-driven molecular motor driving the stepwise translocation of polypeptide chains across the membrane. This Streptomyces griseus subsp. griseus (strain JCM 4626 / CBS 651.72 / NBRC 13350 / KCC S-0626 / ISP 5235) protein is Protein translocase subunit SecA.